Here is a 23-residue protein sequence, read N- to C-terminus: Benzaldehyde dehydrogenase [NAD(+)] I (23 aa).

Belongs to the aldehyde dehydrogenase family. In terms of assembly, homotetramer.

It carries out the reaction benzaldehyde + NAD(+) + H2O = benzoate + NADH + 2 H(+). This chain is Benzaldehyde dehydrogenase [NAD(+)] I, found in Acinetobacter guillouiae (Acinetobacter genomosp. 11).